Reading from the N-terminus, the 366-residue chain is Histidinol-phosphate aminotransferase 2 (366 aa).

Positions 1 to 11 (MQVKDQLSSLQ) are enriched in polar residues. Residues 1–21 (MQVKDQLSSLQPYKPGKSPEQ) form a disordered region. Lys-222 carries the post-translational modification N6-(pyridoxal phosphate)lysine.

It belongs to the class-II pyridoxal-phosphate-dependent aminotransferase family. Histidinol-phosphate aminotransferase subfamily. Homodimer. Pyridoxal 5'-phosphate serves as cofactor.

The enzyme catalyses L-histidinol phosphate + 2-oxoglutarate = 3-(imidazol-4-yl)-2-oxopropyl phosphate + L-glutamate. The protein operates within amino-acid biosynthesis; L-histidine biosynthesis; L-histidine from 5-phospho-alpha-D-ribose 1-diphosphate: step 7/9. The chain is Histidinol-phosphate aminotransferase 2 from Bacillus cereus (strain ATCC 10987 / NRS 248).